Consider the following 427-residue polypeptide: Glutamate-1-semialdehyde 2,1-aminomutase (427 aa).

Position 265 is an N6-(pyridoxal phosphate)lysine (lysine 265).

This sequence belongs to the class-III pyridoxal-phosphate-dependent aminotransferase family. HemL subfamily. In terms of assembly, homodimer. Requires pyridoxal 5'-phosphate as cofactor.

It is found in the cytoplasm. The enzyme catalyses (S)-4-amino-5-oxopentanoate = 5-aminolevulinate. It functions in the pathway porphyrin-containing compound metabolism; protoporphyrin-IX biosynthesis; 5-aminolevulinate from L-glutamyl-tRNA(Glu): step 2/2. In Neisseria meningitidis serogroup B (strain ATCC BAA-335 / MC58), this protein is Glutamate-1-semialdehyde 2,1-aminomutase.